A 279-amino-acid chain; its full sequence is Phosphatidylglycerol--prolipoprotein diacylglyceryl transferase (279 aa).

3 consecutive transmembrane segments (helical) span residues 18–38 (LSVRWYGIIIAVGILLGYFVA), 55–75 (IIFYSALFGFIAARIYFVIFQ), and 89–109 (IWHGGIAIHGGLIGGFIAGVI). Arg-137 provides a ligand contact to a 1,2-diacyl-sn-glycero-3-phospho-(1'-sn-glycerol). The next 2 membrane-spanning stretches (helical) occupy residues 203–223 (LGETFFLYLTWYSIGRFFIEG) and 235–255 (IRVAQLVSILLILISISLIVY).

This sequence belongs to the Lgt family.

Its subcellular location is the cell membrane. It carries out the reaction L-cysteinyl-[prolipoprotein] + a 1,2-diacyl-sn-glycero-3-phospho-(1'-sn-glycerol) = an S-1,2-diacyl-sn-glyceryl-L-cysteinyl-[prolipoprotein] + sn-glycerol 1-phosphate + H(+). It functions in the pathway protein modification; lipoprotein biosynthesis (diacylglyceryl transfer). Its function is as follows. Catalyzes the transfer of the diacylglyceryl group from phosphatidylglycerol to the sulfhydryl group of the N-terminal cysteine of a prolipoprotein, the first step in the formation of mature lipoproteins. In Staphylococcus aureus (strain USA300), this protein is Phosphatidylglycerol--prolipoprotein diacylglyceryl transferase.